The following is an 89-amino-acid chain: Phosphocarrier protein HPr (89 aa).

Residues 1–88 (MLEHELIVTN…ELFENRFNED (88 aa)) form the HPr domain. Histidine 15 acts as the Pros-phosphohistidine intermediate in catalysis. Serine 46 is subject to Phosphoserine; by HPrK/P.

This sequence belongs to the HPr family.

Its subcellular location is the cytoplasm. Its activity is regulated as follows. Phosphorylation on Ser-46 inhibits the phosphoryl transfer from enzyme I to HPr. In terms of biological role, general (non sugar-specific) component of the phosphoenolpyruvate-dependent sugar phosphotransferase system (sugar PTS). This major carbohydrate active-transport system catalyzes the phosphorylation of incoming sugar substrates concomitantly with their translocation across the cell membrane. The phosphoryl group from phosphoenolpyruvate (PEP) is transferred to the phosphoryl carrier protein HPr by enzyme I. Phospho-HPr then transfers it to the PTS EIIA domain. The polypeptide is Phosphocarrier protein HPr (ptsH) (Xylella fastidiosa (strain 9a5c)).